Reading from the N-terminus, the 312-residue chain is Glyoxylate/hydroxypyruvate reductase A (312 aa).

The active site involves R227. H275 functions as the Proton donor in the catalytic mechanism.

This sequence belongs to the D-isomer specific 2-hydroxyacid dehydrogenase family. GhrA subfamily.

It is found in the cytoplasm. It carries out the reaction glycolate + NADP(+) = glyoxylate + NADPH + H(+). The catalysed reaction is (R)-glycerate + NAD(+) = 3-hydroxypyruvate + NADH + H(+). The enzyme catalyses (R)-glycerate + NADP(+) = 3-hydroxypyruvate + NADPH + H(+). In terms of biological role, catalyzes the NADPH-dependent reduction of glyoxylate and hydroxypyruvate into glycolate and glycerate, respectively. Inactive towards 2-oxo-D-gluconate, 2-oxoglutarate, oxaloacetate and pyruvate. Only D- and L-glycerate are involved in the oxidative activity with NADP. Activity with NAD is very low. The polypeptide is Glyoxylate/hydroxypyruvate reductase A (ghrA) (Escherichia coli (strain K12)).